Here is a 56-residue protein sequence, read N- to C-terminus: uncharacterized protein (56 aa).

A helical membrane pass occupies residues 2-22 (ILYIIVAISILLNIILGIKVI).

It is found in the membrane. This is an uncharacterized protein from Methanocaldococcus jannaschii (strain ATCC 43067 / DSM 2661 / JAL-1 / JCM 10045 / NBRC 100440) (Methanococcus jannaschii).